The chain runs to 391 residues: S-adenosylmethionine synthase (391 aa).

The segment at 1-20 is disordered; it reads MPRSDYLFTSESVSEGHPDK. Residue His17 participates in ATP binding. Asp19 is a binding site for Mg(2+). A K(+)-binding site is contributed by Glu45. L-methionine-binding residues include Glu58 and Gln102. A flexible loop region spans residues 102–112; the sequence is QSADIAQGVDA. Residues 169–171, 235–236, Asp244, 250–251, Ala267, and Lys271 contribute to the ATP site; these read DAK, KF, and RK. Residue Asp244 participates in L-methionine binding. Lys275 serves as a coordination point for L-methionine.

This sequence belongs to the AdoMet synthase family. Homotetramer; dimer of dimers. Mg(2+) is required as a cofactor. K(+) serves as cofactor.

The protein localises to the cytoplasm. It carries out the reaction L-methionine + ATP + H2O = S-adenosyl-L-methionine + phosphate + diphosphate. The protein operates within amino-acid biosynthesis; S-adenosyl-L-methionine biosynthesis; S-adenosyl-L-methionine from L-methionine: step 1/1. In terms of biological role, catalyzes the formation of S-adenosylmethionine (AdoMet) from methionine and ATP. The overall synthetic reaction is composed of two sequential steps, AdoMet formation and the subsequent tripolyphosphate hydrolysis which occurs prior to release of AdoMet from the enzyme. This Methylorubrum extorquens (strain CM4 / NCIMB 13688) (Methylobacterium extorquens) protein is S-adenosylmethionine synthase.